The sequence spans 473 residues: Putative amidase AmiC (473 aa).

Active-site charge relay system residues include lysine 82 and serine 157. The active-site Acyl-ester intermediate is the serine 181.

Belongs to the amidase family.

The enzyme catalyses a monocarboxylic acid amide + H2O = a monocarboxylate + NH4(+). The sequence is that of Putative amidase AmiC (amiC) from Mycobacterium bovis (strain ATCC BAA-935 / AF2122/97).